The primary structure comprises 660 residues: DNA mismatch repair protein MutL (660 aa).

The disordered stretch occupies residues 414 to 433; sequence SSVKHASRPQNTFTETDHPN.

It belongs to the DNA mismatch repair MutL/HexB family.

In terms of biological role, this protein is involved in the repair of mismatches in DNA. It is required for dam-dependent methyl-directed DNA mismatch repair. May act as a 'molecular matchmaker', a protein that promotes the formation of a stable complex between two or more DNA-binding proteins in an ATP-dependent manner without itself being part of a final effector complex. This chain is DNA mismatch repair protein MutL, found in Streptococcus pyogenes serotype M5 (strain Manfredo).